An 874-amino-acid polypeptide reads, in one-letter code: S-layer protein (874 aa).

The N-terminal stretch at 1–30 is a signal peptide; the sequence is MAKTNSYKKVIAGTMTAAMVAGVVSPVAAA. 3 SLH domains span residues 31–93, 94–151, and 152–214; these read GKSF…NAQP, SFKD…KVDG, and TLVT…ENSD.

The protein localises to the secreted. The protein resides in the cell wall. It localises to the S-layer. Functionally, the S-layer is a paracrystalline mono-layered assembly of proteins which coat the surface of bacteria. The sequence is that of S-layer protein from Bacillus licheniformis.